Reading from the N-terminus, the 211-residue chain is MNESETLLQFYTWSIFLMSYLIGSIPFGLLFTRLAKLGDVRAIGSGNIGATNVLRTGNKKVATLTLLCDILKGTVVVLVIKFLNDPIENSIIISLVGFFAFLGHLFPIWLKFKGGKGVATYLGVCLGYYWPAAIVFIIVWIMFFILTRYSSLSALIAVIITPIFVYFSYPHLYAHCILVMMSIFVIIKHHANIARLLIGKESKIGTQNRDK.

A run of 6 helical transmembrane segments spans residues 10 to 30 (FYTWSIFLMSYLIGSIPFGLL), 63 to 83 (TLTLLCDILKGTVVVLVIKFL), 90 to 110 (SIIISLVGFFAFLGHLFPIWL), 126 to 146 (LGYYWPAAIVFIIVWIMFFIL), 152 to 172 (LSALIAVIITPIFVYFSYPHL), and 174 to 194 (AHCILVMMSIFVIIKHHANIA).

This sequence belongs to the PlsY family. As to quaternary structure, probably interacts with PlsX.

It is found in the cell inner membrane. The enzyme catalyses an acyl phosphate + sn-glycerol 3-phosphate = a 1-acyl-sn-glycero-3-phosphate + phosphate. The protein operates within lipid metabolism; phospholipid metabolism. In terms of biological role, catalyzes the transfer of an acyl group from acyl-phosphate (acyl-PO(4)) to glycerol-3-phosphate (G3P) to form lysophosphatidic acid (LPA). This enzyme utilizes acyl-phosphate as fatty acyl donor, but not acyl-CoA or acyl-ACP. The protein is Glycerol-3-phosphate acyltransferase of Bartonella quintana (strain Toulouse) (Rochalimaea quintana).